Reading from the N-terminus, the 311-residue chain is Aspartate carbamoyltransferase catalytic subunit (311 aa).

Arg59 and Thr60 together coordinate carbamoyl phosphate. Lys87 provides a ligand contact to L-aspartate. Arg109, His139, and Gln142 together coordinate carbamoyl phosphate. Residues Arg172 and Arg224 each contribute to the L-aspartate site. 2 residues coordinate carbamoyl phosphate: Ala265 and Pro266.

Belongs to the aspartate/ornithine carbamoyltransferase superfamily. ATCase family. In terms of assembly, heterododecamer (2C3:3R2) of six catalytic PyrB chains organized as two trimers (C3), and six regulatory PyrI chains organized as three dimers (R2).

The catalysed reaction is carbamoyl phosphate + L-aspartate = N-carbamoyl-L-aspartate + phosphate + H(+). It functions in the pathway pyrimidine metabolism; UMP biosynthesis via de novo pathway; (S)-dihydroorotate from bicarbonate: step 2/3. In terms of biological role, catalyzes the condensation of carbamoyl phosphate and aspartate to form carbamoyl aspartate and inorganic phosphate, the committed step in the de novo pyrimidine nucleotide biosynthesis pathway. The chain is Aspartate carbamoyltransferase catalytic subunit from Streptococcus pyogenes serotype M1.